A 238-amino-acid chain; its full sequence is Pyridoxine 5'-phosphate synthase (238 aa).

3-amino-2-oxopropyl phosphate is bound at residue Asn7. 9–10 (DH) contributes to the 1-deoxy-D-xylulose 5-phosphate binding site. Arg18 contributes to the 3-amino-2-oxopropyl phosphate binding site. His43 acts as the Proton acceptor in catalysis. Arg45 and His50 together coordinate 1-deoxy-D-xylulose 5-phosphate. Glu70 functions as the Proton acceptor in the catalytic mechanism. Thr100 contributes to the 1-deoxy-D-xylulose 5-phosphate binding site. The Proton donor role is filled by His191. Residues Gly192 and 213–214 (GH) contribute to the 3-amino-2-oxopropyl phosphate site.

This sequence belongs to the PNP synthase family. In terms of assembly, homooctamer; tetramer of dimers.

It localises to the cytoplasm. The catalysed reaction is 3-amino-2-oxopropyl phosphate + 1-deoxy-D-xylulose 5-phosphate = pyridoxine 5'-phosphate + phosphate + 2 H2O + H(+). Its pathway is cofactor biosynthesis; pyridoxine 5'-phosphate biosynthesis; pyridoxine 5'-phosphate from D-erythrose 4-phosphate: step 5/5. In terms of biological role, catalyzes the complicated ring closure reaction between the two acyclic compounds 1-deoxy-D-xylulose-5-phosphate (DXP) and 3-amino-2-oxopropyl phosphate (1-amino-acetone-3-phosphate or AAP) to form pyridoxine 5'-phosphate (PNP) and inorganic phosphate. In Syntrophobacter fumaroxidans (strain DSM 10017 / MPOB), this protein is Pyridoxine 5'-phosphate synthase.